The following is a 763-amino-acid chain: Phospholipid phosphatase-related protein type 4 (763 aa).

The interval Val-33–Arg-54 is disordered. The residue at position 36 (Ser-36) is a Phosphoserine. A run of 3 helical transmembrane segments spans residues Leu-67–Phe-87, Ala-119–Val-139, and Phe-178–Leu-198. N-linked (GlcNAc...) asparagine glycans are attached at residues Asn-214 and Asn-219. Residues Ser-247–Phe-267 traverse the membrane as a helical segment. Asn-268 carries an N-linked (GlcNAc...) asparagine glycan. The next 2 helical transmembrane spans lie at Lys-276–Thr-296 and Val-308–Gly-328. Phosphoserine is present on Ser-346. Asn-362 carries N-linked (GlcNAc...) asparagine glycosylation. The residue at position 385 (Ser-385) is a Phosphoserine. A glycan (N-linked (GlcNAc...) asparagine) is linked at Asn-432. At Ser-438 the chain carries Phosphoserine. Asn-455 carries an N-linked (GlcNAc...) asparagine glycan. Residues Arg-458–Gly-529 are disordered. Residues Ser-461 and Ser-472 each carry the phosphoserine modification. Residues Asn-513, Asn-543, and Asn-568 are each glycosylated (N-linked (GlcNAc...) asparagine). Position 606 is a phosphoserine (Ser-606). Residues Asp-669–Glu-694 show a composition bias toward basic and acidic residues. Disordered stretches follow at residues Asp-669–His-698 and Glu-739–Asp-763. Polar residues predominate over residues Arg-740–Asn-749.

This sequence belongs to the PA-phosphatase related phosphoesterase family. In terms of processing, O-glycosylated. Probably at Ser-346. In terms of tissue distribution, expressed by glutamatergic neurons (at protein level).

It localises to the postsynaptic density membrane. Its function is as follows. Postsynaptic density membrane protein that indirectly regulates glutamatergic synaptic transmission through lysophosphatidic acid (LPA)-mediated signaling pathways. Binds lysophosphatidic acid (LPA) and mediates its internalization into cells. Could act as receptor or a transporter of this lipid at the post-synaptic membrane. Modulates lysophosphatidic acid (LPA) activity in neuron axonal outgrowth during development by attenuating phospholipid-induced axon collapse. The polypeptide is Phospholipid phosphatase-related protein type 4 (Homo sapiens (Human)).